The chain runs to 396 residues: NAD(P)H oxidoreductase RTN4IP1, mitochondrial (396 aa).

The transit peptide at 1-40 (MGFLKTCVFRRNACTAVCFWRSQVVQKPSVRKISTTSPRS) directs the protein to the mitochondrion. One can recognise an Enoyl reductase (ER) domain in the interval 52–393 (GSNEVLRFTQ…RGHARGKTVI (342 aa)). 12 residues coordinate NADPH: S214, G216, V217, S237, Y255, N276, L300, A341, F343, H386, A387, and R388.

It belongs to the zinc-containing alcohol dehydrogenase family. Quinone oxidoreductase subfamily. As to quaternary structure, interacts with RTN4, UQCRC1 and UQCRC2.

The protein resides in the mitochondrion matrix. It is found in the mitochondrion outer membrane. The enzyme catalyses a 3-demethylubiquinone + NADH + 2 H(+) = a 3-demethylubiquinol + NAD(+). It catalyses the reaction a 3-demethylubiquinone + NADPH + 2 H(+) = a 3-demethylubiquinol + NADP(+). It carries out the reaction 3-demethylubiquinone-10 + NADH + 2 H(+) = 3-demethylubiquinol-10 + NAD(+). The catalysed reaction is 3-demethylubiquinone-10 + NADPH + 2 H(+) = 3-demethylubiquinol-10 + NADP(+). It functions in the pathway cofactor biosynthesis; ubiquinone biosynthesis. Its function is as follows. NAD(P)H oxidoreductase involved in the ubiquinone biosynthetic pathway. Required for the O-methyltransferase activity of COQ3. Able to catalyze the oxidoreduction of 3-demethylubiquinone into 3-demethylubiquinol in vitro. However, it is unclear if 3-demethylubiquinone constitutes a substrate in vivo. May also play a role in the regulation of retinal ganglion cell (RGC) neurite outgrowth, and hence in the development of the inner retina and optic nerve. Appears to be a potent inhibitor of regeneration following spinal cord injury. This is NAD(P)H oxidoreductase RTN4IP1, mitochondrial (RTN4IP1) from Bos taurus (Bovine).